The chain runs to 309 residues: UDP-3-O-acyl-N-acetylglucosamine deacetylase (309 aa).

H78, H235, and D239 together coordinate Zn(2+). H262 serves as the catalytic Proton donor.

The protein belongs to the LpxC family. Zn(2+) is required as a cofactor.

It catalyses the reaction a UDP-3-O-[(3R)-3-hydroxyacyl]-N-acetyl-alpha-D-glucosamine + H2O = a UDP-3-O-[(3R)-3-hydroxyacyl]-alpha-D-glucosamine + acetate. It participates in glycolipid biosynthesis; lipid IV(A) biosynthesis; lipid IV(A) from (3R)-3-hydroxytetradecanoyl-[acyl-carrier-protein] and UDP-N-acetyl-alpha-D-glucosamine: step 2/6. In terms of biological role, catalyzes the hydrolysis of UDP-3-O-myristoyl-N-acetylglucosamine to form UDP-3-O-myristoylglucosamine and acetate, the committed step in lipid A biosynthesis. The protein is UDP-3-O-acyl-N-acetylglucosamine deacetylase of Syntrophotalea carbinolica (strain DSM 2380 / NBRC 103641 / GraBd1) (Pelobacter carbinolicus).